The sequence spans 376 residues: DNA repair protein RAD51 homolog 3 (376 aa).

Residues 1–126 (MRGKTFRFEM…LMKTTEICGA (126 aa)) are required for Holliday junction resolution activity. S20 is modified (phosphoserine). The tract at residues 79–136 (SESHKKCTALELLEQEHTQGFIITFCSALDDILGGGVPLMKTTEICGAPGVGKTQLCM) is interaction with RAD51B, RAD51D and XRCC3. 125–132 (GAPGVGKT) contacts ATP. The short motif at 366 to 370 (RKRSR) is the Nuclear localization signal element.

The protein belongs to the RecA family. RAD51 subfamily. As to quaternary structure, part of the RAD51 paralog protein complexes BCDX2 and CX3; the complexes have a ring-like structure arranged into a flat disc around a central channel. The BCDX2 complex consits of RAD51B, RAD51C, RAD51D and XRCC2; the CX3 complex consists of RAD51C and XRCC3. The BCDX2 subcomplex RAD51B:RAD51C interacts with RAD51. Interacts with SWSAP1; involved in homologous recombination repair. Interacts directly with PALB2 which may serve as a scaffold for a HR complex containing PALB2, BRCA2, RAD51C, RAD51 and XRCC3. Interacts with HELQ. Interacts with DNA damage up-regulated protein DDUP. As to expression, expressed in a variety of tissues, with highest expression in testis, heart muscle, spleen and prostate.

The protein resides in the nucleus. It localises to the cytoplasm. The protein localises to the perinuclear region. Its subcellular location is the mitochondrion. In terms of biological role, essential for the homologous recombination (HR) pathway of DNA repair. Involved in the homologous recombination repair (HRR) pathway of double-stranded DNA breaks arising during DNA replication or induced by DNA-damaging agents. Part of the RAD51 paralog protein complexes BCDX2 and CX3 which act at different stages of the BRCA1-BRCA2-dependent HR pathway. Upon DNA damage, BCDX2 seems to act downstream of BRCA2 recruitment and upstream of RAD51 recruitment; CX3 seems to act downstream of RAD51 recruitment; both complexes bind predominantly to the intersection of the four duplex arms of the Holliday junction (HJ) and to junction of replication forks. The BCDX2 complex was originally reported to bind single-stranded DNA, single-stranded gaps in duplex DNA and specifically to nicks in duplex DNA. The BCDX2 subcomplex RAD51B:RAD51C exhibits single-stranded DNA-dependent ATPase activity suggesting an involvement in early stages of the HR pathway. Involved in RAD51 foci formation in response to DNA damage suggesting an involvement in early stages of HR probably in the invasion step. Has an early function in DNA repair in facilitating phosphorylation of the checkpoint kinase CHEK2 and thereby transduction of the damage signal, leading to cell cycle arrest and HR activation. Participates in branch migration and HJ resolution and thus is important for processing HR intermediates late in the DNA repair process; the function may be linked to the CX3 complex. Part of a PALB2-scaffolded HR complex containing BRCA2 and which is thought to play a role in DNA repair by HR. Protects RAD51 from ubiquitin-mediated degradation that is enhanced following DNA damage. Plays a role in regulating mitochondrial DNA copy number under conditions of oxidative stress in the presence of RAD51 and XRCC3. Contributes to DNA cross-link resistance, sister chromatid cohesion and genomic stability. Involved in maintaining centrosome number in mitosis. The chain is DNA repair protein RAD51 homolog 3 (RAD51C) from Homo sapiens (Human).